Reading from the N-terminus, the 540-residue chain is tRNA-2-methylthio-N(6)-dimethylallyladenosine synthase (540 aa).

The MTTase N-terminal domain maps to 41 to 157 (RTYEVRTFGC…LPTLLERSAH (117 aa)). The [4Fe-4S] cluster site is built by cysteine 50, cysteine 86, cysteine 120, cysteine 194, cysteine 198, and cysteine 201. The region spanning 180-416 (RESAYSGWVS…IALQERIQAE (237 aa)) is the Radical SAM core domain. Residues 419–486 (KELVGTTQEL…PFFLIADGPL (68 aa)) enclose the TRAM domain.

It belongs to the methylthiotransferase family. MiaB subfamily. In terms of assembly, monomer. [4Fe-4S] cluster serves as cofactor.

Its subcellular location is the cytoplasm. It catalyses the reaction N(6)-dimethylallyladenosine(37) in tRNA + (sulfur carrier)-SH + AH2 + 2 S-adenosyl-L-methionine = 2-methylsulfanyl-N(6)-dimethylallyladenosine(37) in tRNA + (sulfur carrier)-H + 5'-deoxyadenosine + L-methionine + A + S-adenosyl-L-homocysteine + 2 H(+). Functionally, catalyzes the methylthiolation of N6-(dimethylallyl)adenosine (i(6)A), leading to the formation of 2-methylthio-N6-(dimethylallyl)adenosine (ms(2)i(6)A) at position 37 in tRNAs that read codons beginning with uridine. The sequence is that of tRNA-2-methylthio-N(6)-dimethylallyladenosine synthase from Corynebacterium urealyticum (strain ATCC 43042 / DSM 7109).